A 796-amino-acid chain; its full sequence is MASKTKASEALKVVARCRPLSRKEEAAGHEQILTMDVKLGQVTLRNPRAAPGELPKTFTFDAVYDASSKQADLYDETVRPLIDSVLQGFNGTVFAYGQTGTGKTYTMQGTWVEPELRGVIPNAFEHIFTHISRSQNQQYLVRASYLEIYQEEIRDLLSKEPGKRLELKENPETGVYIKDLSSFVTKNVKEIEHVMNLGNQARAVGSTHMNEVSSRSHAIFVITVECSERGSDGQDHIRVGKLNLVDLAGSERQNKAGPNTPGGPATQSTAGGGGGGGGTSGSGSSGERPKEASKINLSLSALGNVIAALAGNRSTHIPYRDSKLTRLLQDSLGGNAKTIMVATLGPASHSYDESLSTLRFANRAKNIKNKPRVNEDPKDTLLREFQEEIARLKAQLEKKGMLGKRPRRKSSRRKKAVSAPAGYPEGAVIEAWVAEEEDDNNNNHRPPQPTLEAALEKNMENYLQEQKERLEEEKAAIQDDRSLVSEEKQKLLEEKEKMLEDLKREQQATELLAAKYKAMESKLLIGGRNIMDHTNEQQKMLELKRQEIAEQKRREREMQQEMLLRDEETMELRGTYSSLQQEVEVKTKKLKKLYAKLQAVKAEIQDQHEEYIRVRQDLEEAQNEQTRELKLKYLIIENFIPPEEKNKIMNRLFLDCEEEQWKFQPLVPAGVNNSQMKKRPTSAVGYKRPISQYARVAMAMGSHPRYRAENIMFLELDVSPPAIFEMEFSHDQEQDPRVLHMERLMRLDSFLERPSTSKVRKSRSWCQSPQRPPPPSTVHASMASAPLHPATVVDHD.

The Kinesin motor domain occupies 10 to 367 (ALKVVARCRP…LRFANRAKNI (358 aa)). 97-104 (GQTGTGKT) provides a ligand contact to ATP. Disordered stretches follow at residues 251-292 (ERQN…PKEA), 397-421 (EKKGMLGKRPRRKSSRRKKAVSAPA), and 754-796 (PSTS…VDHD). Over residues 270 to 284 (AGGGGGGGGTSGSGS) the composition is skewed to gly residues. Positions 378 to 632 (KDTLLREFQE…NEQTRELKLK (255 aa)) form a coiled coil. A compositionally biased stretch (basic residues) spans 401–416 (MLGKRPRRKSSRRKKA). The interval 633-793 (YLIIENFIPP…SAPLHPATVV (161 aa)) is globular.

It belongs to the TRAFAC class myosin-kinesin ATPase superfamily. Kinesin family. Kinesin II subfamily. As to quaternary structure, heterodimer of KIF3A and KIF3C.

It localises to the cytoplasm. It is found in the cytoskeleton. Microtubule-based anterograde translocator for membranous organelles. The chain is Kinesin-like protein KIF3C (Kif3c) from Rattus norvegicus (Rat).